A 411-amino-acid polypeptide reads, in one-letter code: Chorismate synthase (411 aa).

Positions 40 and 46 each coordinate NADP(+). FMN contacts are provided by residues 135-137 and 256-257; these read RAS and QA. Residues 278-299 are disordered; that stretch reads HDGIARGADGRPRRTSDRAGGI. A compositionally biased stretch (basic and acidic residues) spans 285–294; sequence ADGRPRRTSD. FMN contacts are provided by residues A301, 316-320, and R342; that span reads KPIAT.

This sequence belongs to the chorismate synthase family. In terms of assembly, homotetramer. FMNH2 is required as a cofactor.

It catalyses the reaction 5-O-(1-carboxyvinyl)-3-phosphoshikimate = chorismate + phosphate. It functions in the pathway metabolic intermediate biosynthesis; chorismate biosynthesis; chorismate from D-erythrose 4-phosphate and phosphoenolpyruvate: step 7/7. Its function is as follows. Catalyzes the anti-1,4-elimination of the C-3 phosphate and the C-6 proR hydrogen from 5-enolpyruvylshikimate-3-phosphate (EPSP) to yield chorismate, which is the branch point compound that serves as the starting substrate for the three terminal pathways of aromatic amino acid biosynthesis. This reaction introduces a second double bond into the aromatic ring system. This is Chorismate synthase from Micrococcus luteus (strain ATCC 4698 / DSM 20030 / JCM 1464 / CCM 169 / CCUG 5858 / IAM 1056 / NBRC 3333 / NCIMB 9278 / NCTC 2665 / VKM Ac-2230) (Micrococcus lysodeikticus).